The primary structure comprises 264 residues: Acyl-[acyl-carrier-protein]--UDP-N-acetylglucosamine O-acyltransferase (264 aa).

This sequence belongs to the transferase hexapeptide repeat family. LpxA subfamily. In terms of assembly, homotrimer.

Its subcellular location is the cytoplasm. The enzyme catalyses a (3R)-hydroxyacyl-[ACP] + UDP-N-acetyl-alpha-D-glucosamine = a UDP-3-O-[(3R)-3-hydroxyacyl]-N-acetyl-alpha-D-glucosamine + holo-[ACP]. Its pathway is glycolipid biosynthesis; lipid IV(A) biosynthesis; lipid IV(A) from (3R)-3-hydroxytetradecanoyl-[acyl-carrier-protein] and UDP-N-acetyl-alpha-D-glucosamine: step 1/6. In terms of biological role, involved in the biosynthesis of lipid A, a phosphorylated glycolipid that anchors the lipopolysaccharide to the outer membrane of the cell. This Rickettsia conorii (strain ATCC VR-613 / Malish 7) protein is Acyl-[acyl-carrier-protein]--UDP-N-acetylglucosamine O-acyltransferase.